The sequence spans 214 residues: Predicted GPI-anchored protein 57 (214 aa).

A signal peptide spans 1–18 (MLFTQLIILFTFISQIIC). The disordered stretch occupies residues 36–101 (RGSSGHSSGG…SSGSSSGSRN (66 aa)). Residues 42 to 60 (SSGGGHSSSGSHSSGGGHS) show a composition bias toward gly residues. Low complexity predominate over residues 76 to 85 (SGSSSGSSSG). A glycan (N-linked (GlcNAc...) asparagine) is linked at N182. Residue G191 is the site of GPI-anchor amidated glycine attachment. The propeptide at 192–214 (VSLNIPSTHFYVIGLAAAYSIVL) is removed in mature form.

Belongs to the PGA37 family.

It localises to the secreted. It is found in the cell membrane. Functionally, predicted GPI-anchored protein which may have a role during host infection. This Candida albicans (strain SC5314 / ATCC MYA-2876) (Yeast) protein is Predicted GPI-anchored protein 57 (PGA57).